The following is a 428-amino-acid chain: Putative aminotransferase MSMEG_6286/MSMEI_6121 (428 aa).

Residue Gly37 coordinates substrate. Pyridoxal 5'-phosphate contacts are provided by residues Tyr72, 102–105 (ASLE), Asn191, 222–225 (AYAV), and 256–258 (STS). Residue Lys339 forms an Isoglutamyl lysine isopeptide (Lys-Gln) (interchain with Q-Cter in protein Pup) linkage.

It belongs to the class-I pyridoxal-phosphate-dependent aminotransferase family. Pyridoxal 5'-phosphate serves as cofactor.

The chain is Putative aminotransferase MSMEG_6286/MSMEI_6121 from Mycolicibacterium smegmatis (strain ATCC 700084 / mc(2)155) (Mycobacterium smegmatis).